We begin with the raw amino-acid sequence, 545 residues long: Glucose-6-phosphate isomerase 1 (545 aa).

E356 acts as the Proton donor in catalysis. Active-site residues include H387 and K508.

Belongs to the GPI family.

The protein resides in the cytoplasm. It catalyses the reaction alpha-D-glucose 6-phosphate = beta-D-fructose 6-phosphate. The protein operates within carbohydrate biosynthesis; gluconeogenesis. Its pathway is carbohydrate degradation; glycolysis; D-glyceraldehyde 3-phosphate and glycerone phosphate from D-glucose: step 2/4. Functionally, catalyzes the reversible isomerization of glucose-6-phosphate to fructose-6-phosphate. The protein is Glucose-6-phosphate isomerase 1 of Cupriavidus pinatubonensis (strain JMP 134 / LMG 1197) (Cupriavidus necator (strain JMP 134)).